The chain runs to 123 residues: Ribosome-binding factor A (123 aa).

It belongs to the RbfA family. As to quaternary structure, monomer. Binds 30S ribosomal subunits, but not 50S ribosomal subunits or 70S ribosomes.

It is found in the cytoplasm. In terms of biological role, one of several proteins that assist in the late maturation steps of the functional core of the 30S ribosomal subunit. Associates with free 30S ribosomal subunits (but not with 30S subunits that are part of 70S ribosomes or polysomes). Required for efficient processing of 16S rRNA. May interact with the 5'-terminal helix region of 16S rRNA. This Neisseria meningitidis serogroup B (strain ATCC BAA-335 / MC58) protein is Ribosome-binding factor A.